Here is a 505-residue protein sequence, read N- to C-terminus: Lysine--tRNA ligase (505 aa).

Mg(2+) contacts are provided by glutamate 415 and glutamate 422.

This sequence belongs to the class-II aminoacyl-tRNA synthetase family. Homodimer. The cofactor is Mg(2+).

The protein localises to the cytoplasm. It catalyses the reaction tRNA(Lys) + L-lysine + ATP = L-lysyl-tRNA(Lys) + AMP + diphosphate. The protein is Lysine--tRNA ligase of Salmonella typhi.